The following is a 345-amino-acid chain: Phenylalanine--tRNA ligase alpha subunit (345 aa).

Glu-266 is a binding site for Mg(2+).

The protein belongs to the class-II aminoacyl-tRNA synthetase family. Phe-tRNA synthetase alpha subunit type 1 subfamily. In terms of assembly, tetramer of two alpha and two beta subunits. Requires Mg(2+) as cofactor.

It is found in the cytoplasm. The catalysed reaction is tRNA(Phe) + L-phenylalanine + ATP = L-phenylalanyl-tRNA(Phe) + AMP + diphosphate + H(+). The chain is Phenylalanine--tRNA ligase alpha subunit from Burkholderia lata (strain ATCC 17760 / DSM 23089 / LMG 22485 / NCIMB 9086 / R18194 / 383).